A 149-amino-acid polypeptide reads, in one-letter code: Major outer capsid protein (149 aa).

Homotrimer.

It is found in the virion. Its function is as follows. Assembles to form an icosahedral capsid with a T=13 symmetry. Drives the penetration of the inner capsid (core) into the cytoplasm. This chain is Major outer capsid protein (P8), found in Pseudomonas phage phi6 (Bacteriophage phi-6).